Reading from the N-terminus, the 382-residue chain is uncharacterized protein (382 aa).

The next 11 helical transmembrane spans lie at 8 to 28, 41 to 61, 73 to 93, 94 to 114, 133 to 153, 157 to 177, 208 to 228, 235 to 255, 274 to 294, 325 to 345, and 349 to 369; these read VLLLLCGLLLFTISIAVLNTL, WQVGMVSSSYFTGNLVGTLIA, SYHCSCILFALATCGLMLTVD, FWSWLGWRFLAGIACALIWVI, AAYMMVYYLGTVIGQLLLGIV, LLSVIPWVGALVITAMLPLLF, GCIISGVLLGSLYGLLPLYLS, ASVGGWMALLVSSGIIGQWPM, VVILGSVAILGNYAMAPALFI, ALLMSYTLGSLAGPTMTSLLM, and SDNLLFIMIAGVAFVYLMMLL.

The protein belongs to the major facilitator superfamily. YcaD (TC 2.A.1.26) family.

It localises to the cell inner membrane. This is an uncharacterized protein from Yersinia pseudotuberculosis serotype IB (strain PB1/+).